The following is a 587-amino-acid chain: V-type proton ATPase catalytic subunit A (587 aa).

243 to 250 (GAFGCGKT) provides a ligand contact to ATP.

Belongs to the ATPase alpha/beta chains family. As to quaternary structure, V-ATPase is a heteromultimeric enzyme composed of a peripheral catalytic V1 complex (main components: subunits A, B, C, D, E, and F) attached to an integral membrane V0 proton pore complex (main component: the proteolipid protein).

It catalyses the reaction ATP + H2O + 4 H(+)(in) = ADP + phosphate + 5 H(+)(out). Functionally, catalytic subunit of the peripheral V1 complex of vacuolar ATPase. V-ATPase vacuolar ATPase is responsible for acidifying a variety of intracellular compartments in eukaryotic cells. This chain is V-type proton ATPase catalytic subunit A, found in Cyanidium caldarium (Red alga).